The chain runs to 88 residues: Enticin (88 aa).

A signal peptide spans 1 to 19; the sequence is MKTALPLLLLTCLVAAVQS. 3 disulfide bridges follow: Cys25-Cys33, Cys40-Cys52, and Cys59-Cys67. The propeptide occupies 69 to 88; the sequence is REQSQLNHDHLNNHTTTQQP.

In terms of assembly, binds to attractin and temptin.

It localises to the secreted. Its function is as follows. A component of the complex of water-borne protein pheromones that stimulates attraction and mating behavior. This is Enticin from Aplysia californica (California sea hare).